A 179-amino-acid polypeptide reads, in one-letter code: UPF0227 protein PM0825 (179 aa).

Belongs to the UPF0227 family.

The chain is UPF0227 protein PM0825 from Pasteurella multocida (strain Pm70).